Here is a 139-residue protein sequence, read N- to C-terminus: Large ribosomal subunit protein uL16 (139 aa).

The span at 1–13 (MLQPARRKYRKEQ) shows a compositional bias: basic residues. Positions 1–23 (MLQPARRKYRKEQKGRNTGISHS) are disordered.

It belongs to the universal ribosomal protein uL16 family. Part of the 50S ribosomal subunit.

Binds 23S rRNA and is also seen to make contacts with the A and possibly P site tRNAs. The polypeptide is Large ribosomal subunit protein uL16 (Herminiimonas arsenicoxydans).